The following is a 254-amino-acid chain: Leucyl/phenylalanyl-tRNA--protein transferase (254 aa).

Belongs to the L/F-transferase family.

It is found in the cytoplasm. It catalyses the reaction N-terminal L-lysyl-[protein] + L-leucyl-tRNA(Leu) = N-terminal L-leucyl-L-lysyl-[protein] + tRNA(Leu) + H(+). The catalysed reaction is N-terminal L-arginyl-[protein] + L-leucyl-tRNA(Leu) = N-terminal L-leucyl-L-arginyl-[protein] + tRNA(Leu) + H(+). The enzyme catalyses L-phenylalanyl-tRNA(Phe) + an N-terminal L-alpha-aminoacyl-[protein] = an N-terminal L-phenylalanyl-L-alpha-aminoacyl-[protein] + tRNA(Phe). Its function is as follows. Functions in the N-end rule pathway of protein degradation where it conjugates Leu, Phe and, less efficiently, Met from aminoacyl-tRNAs to the N-termini of proteins containing an N-terminal arginine or lysine. The sequence is that of Leucyl/phenylalanyl-tRNA--protein transferase from Burkholderia cenocepacia (strain HI2424).